The primary structure comprises 257 residues: Electron transfer flavoprotein subunit beta (257 aa).

It belongs to the ETF beta-subunit/FixA family. Heterodimer of an alpha and a beta subunit. Requires FAD as cofactor. AMP serves as cofactor.

Its function is as follows. The electron transfer flavoprotein serves as a specific electron acceptor for other dehydrogenases. It transfers the electrons to the main respiratory chain via ETF-ubiquinone oxidoreductase (ETF dehydrogenase). In Bacillus subtilis (strain 168), this protein is Electron transfer flavoprotein subunit beta (etfB).